Here is a 160-residue protein sequence, read N- to C-terminus: Ribosomal RNA large subunit methyltransferase H (160 aa).

S-adenosyl-L-methionine is bound by residues L76 and G108.

This sequence belongs to the RNA methyltransferase RlmH family. As to quaternary structure, homodimer.

The protein localises to the cytoplasm. The enzyme catalyses pseudouridine(1915) in 23S rRNA + S-adenosyl-L-methionine = N(3)-methylpseudouridine(1915) in 23S rRNA + S-adenosyl-L-homocysteine + H(+). Specifically methylates the pseudouridine at position 1915 (m3Psi1915) in 23S rRNA. The sequence is that of Ribosomal RNA large subunit methyltransferase H from Rhodopseudomonas palustris (strain TIE-1).